Consider the following 695-residue polypeptide: MSKLSEKEAFLFDRSIDQFEKGQYSKSLKTIQSVLKKKPKHPDSVALLGLNLCKLHDSRSALLKCGYASSIDPKSQFCWHALAIVYRETKDYNNSLKCYQNALAISPNNESLWYDAAYLQAQLGLYQPLFDNWNRLLQLDSSNLEYRLCFTLSAFLSGNYKESLEQIQYLISSCNLSPLVVSRLISFLPRICEHIENGSQTVLEILLMNQNSFLNNFNFEHIKADFAFRQKNYEESIYLYARLLIKFPNRLDYSEKYLNSLWNFYKSGGLALDLLLKRTDSLIKTFSEILQTGISVLIFLLSKNLDYDFCLNHLISYSMHHFIPSFISLLKIPLKTNDAFSKKLITMLSNFREGDSAKNIPTHKLWCTYCLCLAHYKLGDYEESNYWLNLAIDHTPTYPELFLAKAKIFLCMGEIEEALCSFKRSVELDKSDRALASKYAKYLIRMDRNEEAYIVLSKFSRFRFGGVCNYLAETECVWFLVEDGESLLRQKLYGLALKRFHSIYQIYKKWSFLKFDYFTQCAEDGEFQEYVELVEWSDNLWSSTDYLRATLGALTIYLLLFESKFNMYGNKAEEISHMSEVEQIAYAREDNKKIMKLQKIEEDKIKSYIPSESEEPLVIDEDYFGHKLLITDDPLTEAMRFLQPICWHKIKGWGFLKILSSKLYKLKGIIFCYYALTNNIEGLHQKANSLETSVL.

TPR repeat units lie at residues 8–41 (EAFLFDRSIDQFEKGQYSKSLKTIQSVLKKKPKH), 43–75 (DSVALLGLNLCKLHDSRSALLKCGYASSIDPKS), 76–109 (QFCWHALAIVYRETKDYNNSLKCYQNALAISPNN), 111–143 (SLWYDAAYLQAQLGLYQPLFDNWNRLLQLDSSN), 145–177 (EYRLCFTLSAFLSGNYKESLEQIQYLISSCNLS), 217–250 (FNFEHIKADFAFRQKNYEESIYLYARLLIKFPNR), 262–296 (WNFYKSGGLALDLLLKRTDSLIKTFSEILQTGISV), 365–398 (LWCTYCLCLAHYKLGDYEESNYWLNLAIDHTPTY), 399–432 (PELFLAKAKIFLCMGEIEEALCSFKRSVELDKSD), and 477–510 (VWFLVEDGESLLRQKLYGLALKRFHSIYQIYKKW).

As to quaternary structure, component of the N-terminal acetyltransferase A (NatA) complex.

The protein resides in the cytoplasm. It is found in the nucleus. In terms of biological role, non-catalytic component of the NatA N-terminal acetyltransferase, which catalyzes acetylation of proteins beginning with Met-Ser, Met-Gly and Met-Ala. N-acetylation plays a role in normal eukaryotic translation and processing, protect against proteolytic degradation and protein turnover. The protein is N-terminal acetyltransferase A complex subunit-like protein C418.02 of Schizosaccharomyces pombe (strain 972 / ATCC 24843) (Fission yeast).